The chain runs to 424 residues: MFDVVISDIEAREILDSRGYPTLCVKVITNTGTFGEACVPSGASTGIKEALELRDKDPKRYQGKGVLQAISNVEKVLVPALQGFSVFDQITADAIMIDADGTPNKEKLGANAILGVSLALAKAAANTLQRPLYRYLGGSFSHVLPCPMMNLINGGMHATNGLQFQEFMIRPISAPSLKEAVRMGAEVFNALKKILQNRQLATGVGDEGGFAPNLASNAEALDLLLTAIETAGFTPREDISLALDCAASSFYNTQDKTYDGKSYADQVGILAELCEHYPIDSIEDGLAEEDFEGWKLLSETLGDRVQLVGDDLFVTNSALIAEGIAQGLANAVLIKPNQIGTLTETAEAIRLATIQGYATILSHRSGETEDTTIADLAVAFNTGQIKTGSLSRSERIAKYNRLMAIEEEMGPEALFQDSNPFSKA.

Q165 provides a ligand contact to (2R)-2-phosphoglycerate. E207 serves as the catalytic Proton donor. Residues D244, E283, and D310 each contribute to the Mg(2+) site. Residues K335, R364, S365, and K386 each contribute to the (2R)-2-phosphoglycerate site. K335 (proton acceptor) is an active-site residue.

This sequence belongs to the enolase family. It depends on Mg(2+) as a cofactor.

It localises to the cytoplasm. It is found in the secreted. Its subcellular location is the cell surface. The enzyme catalyses (2R)-2-phosphoglycerate = phosphoenolpyruvate + H2O. It functions in the pathway carbohydrate degradation; glycolysis; pyruvate from D-glyceraldehyde 3-phosphate: step 4/5. Its function is as follows. Catalyzes the reversible conversion of 2-phosphoglycerate (2-PG) into phosphoenolpyruvate (PEP). It is essential for the degradation of carbohydrates via glycolysis. The sequence is that of Enolase from Chlamydia trachomatis serovar L2 (strain ATCC VR-902B / DSM 19102 / 434/Bu).